We begin with the raw amino-acid sequence, 548 residues long: MKKVTAMLFSMAVGLNAGSAAAKAKASEEQETDVLLIGGGIMSATLGTYLRELEPEWSMTMVERLDSVAQESSNGWNNAGTGHSALMELNYTPQNADGSISIEKAVAINEAFQISRQFWAHQVERGVLRTPRSFINTVPHMSFVWGEDNVNFLRARYAALQQSSLFRGMRYSEDHEQIKEWAPLVMEGRDPQQKVAATRTEIGTDVNYGEITRQLIASLQKKSNFSLQLSSEVRALKRNGDKSWTVTIADLKNGTVHNIRAKFVFIGAGGAALKLLQESGIPEAKDYAGFPVGGQFLVSENPDVVNHHLAKVYGKASVGAPPMSVPHIDTRVLDGKRVVLFGPFATFSTKFLKNGSLWDLMSSTTTSNVLPMMHVGLDNFDLVKYLISQVMLSEDDRFAALKEYYPQAKKEDWRLWQAGQRVQIIKRDADKGGVLRLGTEVVSDQQGTIAALLGASPGASTAAPIMLNLLEKVFGDRVSSPQWQATLKAIVPSYGSKLNGNVAATERELQYTSEVLGLKYDKPQAADSTPKAQLKPQPARKEVADIAL.

A disordered region spans residues Lys522 to Leu548. The segment covering Ala539 to Leu548 has biased composition (basic and acidic residues).

The protein belongs to the MQO family. It depends on FAD as a cofactor.

It carries out the reaction (S)-malate + a quinone = a quinol + oxaloacetate. Its pathway is carbohydrate metabolism; tricarboxylic acid cycle; oxaloacetate from (S)-malate (quinone route): step 1/1. In Escherichia fergusonii (strain ATCC 35469 / DSM 13698 / CCUG 18766 / IAM 14443 / JCM 21226 / LMG 7866 / NBRC 102419 / NCTC 12128 / CDC 0568-73), this protein is Probable malate:quinone oxidoreductase.